The following is a 319-amino-acid chain: Putrescine hydroxycinnamoyltransferase 2 (319 aa).

Residues histidine 160 and aspartate 301 each act as proton acceptor in the active site.

Belongs to the plant acyltransferase family.

In terms of biological role, hydroxycinnamoyl transferase that catalyzes the transfer of an acyl from p-coumaryol-CoA to putrescine, to produce coumaroyl putrescine. This Oryza sativa subsp. japonica (Rice) protein is Putrescine hydroxycinnamoyltransferase 2.